The sequence spans 257 residues: Imidazole glycerol phosphate synthase subunit HisF (257 aa).

Residues aspartate 11 and aspartate 130 contribute to the active site.

Belongs to the HisA/HisF family. As to quaternary structure, heterodimer of HisH and HisF.

The protein resides in the cytoplasm. It catalyses the reaction 5-[(5-phospho-1-deoxy-D-ribulos-1-ylimino)methylamino]-1-(5-phospho-beta-D-ribosyl)imidazole-4-carboxamide + L-glutamine = D-erythro-1-(imidazol-4-yl)glycerol 3-phosphate + 5-amino-1-(5-phospho-beta-D-ribosyl)imidazole-4-carboxamide + L-glutamate + H(+). It participates in amino-acid biosynthesis; L-histidine biosynthesis; L-histidine from 5-phospho-alpha-D-ribose 1-diphosphate: step 5/9. Functionally, IGPS catalyzes the conversion of PRFAR and glutamine to IGP, AICAR and glutamate. The HisF subunit catalyzes the cyclization activity that produces IGP and AICAR from PRFAR using the ammonia provided by the HisH subunit. The protein is Imidazole glycerol phosphate synthase subunit HisF of Shewanella sp. (strain MR-4).